Reading from the N-terminus, the 424-residue chain is 3-ketoacyl-CoA thiolase B, peroxisomal (424 aa).

Residues 1 to 26 constitute a peroxisome transit peptide; that stretch reads MHRLQVVLGHLAGRPESSSALQAAPC. A PTS2-type peroxisomal targeting signal region spans residues 1 to 26; that stretch reads MHRLQVVLGHLAGRPESSSALQAAPC. Cysteine 123 functions as the Acyl-thioester intermediate in the catalytic mechanism. Residues lysine 173 and lysine 234 each carry the N6-acetyllysine modification. CoA is bound by residues arginine 249, threonine 252, and serine 276. The active-site Proton donor/acceptor is cysteine 408.

This sequence belongs to the thiolase-like superfamily. Thiolase family. Homodimer. Interacts (via PTS2-type peroxisomal targeting signal region) with PEX7; leading to its translocation into peroxisomes. As to expression, mainly expressed in liver; weaker levels in kidney, intestine and white adipose tissue.

It is found in the peroxisome. It catalyses the reaction an acyl-CoA + acetyl-CoA = a 3-oxoacyl-CoA + CoA. It carries out the reaction 2 acetyl-CoA = acetoacetyl-CoA + CoA. The enzyme catalyses hexanoyl-CoA + acetyl-CoA = 3-oxooctanoyl-CoA + CoA. The catalysed reaction is tetradecanoyl-CoA + acetyl-CoA = 3-oxohexadecanoyl-CoA + CoA. It catalyses the reaction 3-oxohexadecanedioyl-CoA + CoA = tetradecanedioyl-CoA + acetyl-CoA. It carries out the reaction 3-oxo-(6Z,9Z,12Z,15Z,18Z,21Z)-tetracosahexaenoyl-CoA + CoA = (4Z,7Z,10Z,13Z,16Z,19Z)-docosahexaenoyl-CoA + acetyl-CoA. It participates in lipid metabolism; peroxisomal fatty acid beta-oxidation. Functionally, responsible for the thiolytic cleavage of straight chain 3-keto fatty acyl-CoAs (3-oxoacyl-CoAs). Plays an important role in fatty acid peroxisomal beta-oxidation. Catalyzes the cleavage of short, medium, long, and very long straight chain 3-oxoacyl-CoAs. The protein is 3-ketoacyl-CoA thiolase B, peroxisomal of Mus musculus (Mouse).